Reading from the N-terminus, the 329-residue chain is UPF0158 protein CT_429 (329 aa).

The tract at residues glycine 292 to serine 329 is disordered. Over residues serine 295 to glutamate 313 the composition is skewed to acidic residues. Residues lysine 317–serine 329 are compositionally biased toward basic residues.

It belongs to the UPF0158 family.

The sequence is that of UPF0158 protein CT_429 from Chlamydia trachomatis serovar D (strain ATCC VR-885 / DSM 19411 / UW-3/Cx).